Consider the following 91-residue polypeptide: DNA-binding protein HRL53 (91 aa).

The tract at residues 57–91 is disordered; it reads ATKGRNPSTGAEVDIPARNVPKFTPGKGLKDAVNG.

Belongs to the bacterial histone-like protein family.

Functionally, histone-like DNA-binding protein which is capable of wrapping DNA to stabilize it, and thus to prevent its denaturation under extreme environmental conditions. Binds to nod promoters and induces DNA binding. This chain is DNA-binding protein HRL53, found in Rhizobium leguminosarum.